The following is a 444-amino-acid chain: Gamma-glutamyl phosphate reductase (444 aa).

Belongs to the gamma-glutamyl phosphate reductase family.

It is found in the cytoplasm. It catalyses the reaction L-glutamate 5-semialdehyde + phosphate + NADP(+) = L-glutamyl 5-phosphate + NADPH + H(+). The protein operates within amino-acid biosynthesis; L-proline biosynthesis; L-glutamate 5-semialdehyde from L-glutamate: step 2/2. In terms of biological role, catalyzes the NADPH-dependent reduction of L-glutamate 5-phosphate into L-glutamate 5-semialdehyde and phosphate. The product spontaneously undergoes cyclization to form 1-pyrroline-5-carboxylate. The protein is Gamma-glutamyl phosphate reductase of Albidiferax ferrireducens (strain ATCC BAA-621 / DSM 15236 / T118) (Rhodoferax ferrireducens).